Reading from the N-terminus, the 313-residue chain is Small ribosomal subunit protein uS2 (313 aa).

Residues 234 to 243 (DEEAKEEKTK) show a composition bias toward basic and acidic residues. The tract at residues 234 to 313 (DEEAKEEKTK…ASKAEAEEGK (80 aa)) is disordered. Residues 244 to 256 (AKTTAKKVVTKKA) are compositionally biased toward basic residues. Over residues 266-297 (AEKKSEKPTTEKRPTKEAAETKETSEEPKTKE) the composition is skewed to basic and acidic residues.

This sequence belongs to the universal ribosomal protein uS2 family.

In Coxiella burnetii (strain Dugway 5J108-111), this protein is Small ribosomal subunit protein uS2.